Here is a 309-residue protein sequence, read N- to C-terminus: Probable manganese-dependent inorganic pyrophosphatase (309 aa).

Mn(2+) contacts are provided by histidine 9, aspartate 13, aspartate 15, aspartate 75, histidine 97, and aspartate 149.

This sequence belongs to the PPase class C family. It depends on Mn(2+) as a cofactor.

The protein localises to the cytoplasm. The catalysed reaction is diphosphate + H2O = 2 phosphate + H(+). The sequence is that of Probable manganese-dependent inorganic pyrophosphatase from Bacillus mycoides (strain KBAB4) (Bacillus weihenstephanensis).